A 397-amino-acid chain; its full sequence is Adenylosuccinate synthetase (397 aa).

GTP contacts are provided by residues 11–17 (GDEGKGK) and 39–41 (GHT). D12 serves as the catalytic Proton acceptor. Mg(2+)-binding residues include D12 and G39. IMP is bound by residues 12–15 (DEGK), 37–40 (NAGH), T125, R139, Q212, T227, and R290. The active-site Proton donor is the H40. Residue 286–292 (STTGRPR) participates in substrate binding. Residues R292, 318 to 320 (KAD), and 386 to 388 (STG) contribute to the GTP site.

The protein belongs to the adenylosuccinate synthetase family. Homodimer. It depends on Mg(2+) as a cofactor.

It localises to the cytoplasm. The enzyme catalyses IMP + L-aspartate + GTP = N(6)-(1,2-dicarboxyethyl)-AMP + GDP + phosphate + 2 H(+). It functions in the pathway purine metabolism; AMP biosynthesis via de novo pathway; AMP from IMP: step 1/2. Its function is as follows. Plays an important role in the de novo pathway of purine nucleotide biosynthesis. Catalyzes the first committed step in the biosynthesis of AMP from IMP. This is Adenylosuccinate synthetase from Thermotoga maritima (strain ATCC 43589 / DSM 3109 / JCM 10099 / NBRC 100826 / MSB8).